The following is a 488-amino-acid chain: Proline--tRNA ligase (488 aa).

Belongs to the class-II aminoacyl-tRNA synthetase family. ProS type 3 subfamily. As to quaternary structure, homodimer.

Its subcellular location is the cytoplasm. The enzyme catalyses tRNA(Pro) + L-proline + ATP = L-prolyl-tRNA(Pro) + AMP + diphosphate. Functionally, catalyzes the attachment of proline to tRNA(Pro) in a two-step reaction: proline is first activated by ATP to form Pro-AMP and then transferred to the acceptor end of tRNA(Pro). In Pyrobaculum arsenaticum (strain DSM 13514 / JCM 11321 / PZ6), this protein is Proline--tRNA ligase.